The primary structure comprises 201 residues: LexA repressor (201 aa).

A DNA-binding region (H-T-H motif) is located at residues 29–49; it reads VREICKAVGLSSTSSVHFHLK. Catalysis depends on for autocatalytic cleavage activity residues Ser-125 and Lys-162.

The protein belongs to the peptidase S24 family. As to quaternary structure, homodimer.

The catalysed reaction is Hydrolysis of Ala-|-Gly bond in repressor LexA.. Represses a number of genes involved in the response to DNA damage (SOS response), including recA and lexA. In the presence of single-stranded DNA, RecA interacts with LexA causing an autocatalytic cleavage which disrupts the DNA-binding part of LexA, leading to derepression of the SOS regulon and eventually DNA repair. This Clostridium botulinum (strain ATCC 19397 / Type A) protein is LexA repressor.